Here is a 600-residue protein sequence, read N- to C-terminus: NADH-quinone oxidoreductase subunit C/D (600 aa).

The interval 1 to 190 (MVNNMTDLTA…SPFELTKAKQ (190 aa)) is NADH dehydrogenase I subunit C. Residues 214–600 (DFMFLNLGPN…IDFVMSDVDR (387 aa)) are NADH dehydrogenase I subunit D.

This sequence in the N-terminal section; belongs to the complex I 30 kDa subunit family. In the C-terminal section; belongs to the complex I 49 kDa subunit family. In terms of assembly, NDH-1 is composed of 13 different subunits. Subunits NuoB, CD, E, F, and G constitute the peripheral sector of the complex.

Its subcellular location is the cell inner membrane. It catalyses the reaction a quinone + NADH + 5 H(+)(in) = a quinol + NAD(+) + 4 H(+)(out). In terms of biological role, NDH-1 shuttles electrons from NADH, via FMN and iron-sulfur (Fe-S) centers, to quinones in the respiratory chain. The immediate electron acceptor for the enzyme in this species is believed to be ubiquinone. Couples the redox reaction to proton translocation (for every two electrons transferred, four hydrogen ions are translocated across the cytoplasmic membrane), and thus conserves the redox energy in a proton gradient. This is NADH-quinone oxidoreductase subunit C/D from Shigella boydii serotype 18 (strain CDC 3083-94 / BS512).